A 545-amino-acid chain; its full sequence is Glutamine-dependent NAD(+) synthetase (545 aa).

The 243-residue stretch at 5-247 folds into the CN hydrolase domain; the sequence is LRIAMAQFDF…DQWLVVDYMR (243 aa). The active-site Proton acceptor; for glutaminase activity is E46. Catalysis depends on K113, which acts as the For glutaminase activity. An L-glutamine-binding site is contributed by Y119. C151 acts as the Nucleophile; for glutaminase activity in catalysis. The L-glutamine site is built by S177 and K183. A ligase region spans residues 269–545; that stretch reads VWRAVVRGVQ…RYPISNAYRG (277 aa). 292–299 provides a ligand contact to ATP; it reads GLSGGIDS. A deamido-NAD(+)-binding site is contributed by N375. T399 serves as a coordination point for ATP. Deamido-NAD(+) contacts are provided by E404 and K516.

This sequence in the C-terminal section; belongs to the NAD synthetase family.

It carries out the reaction deamido-NAD(+) + L-glutamine + ATP + H2O = L-glutamate + AMP + diphosphate + NAD(+) + H(+). It functions in the pathway cofactor biosynthesis; NAD(+) biosynthesis; NAD(+) from deamido-NAD(+) (L-Gln route): step 1/1. In terms of biological role, catalyzes the ATP-dependent amidation of deamido-NAD to form NAD. Uses L-glutamine as a nitrogen source. This Xylella fastidiosa (strain Temecula1 / ATCC 700964) protein is Glutamine-dependent NAD(+) synthetase.